The following is a 66-amino-acid chain: MAVPKKKTSKSRRNMRRSHLALGKVNVIVDSQTGEYKLPHHVSLVDGTYNNRQVVTKRIETEEAVA.

This sequence belongs to the bacterial ribosomal protein bL32 family.

This chain is Large ribosomal subunit protein bL32, found in Rickettsia akari (strain Hartford).